The following is a 229-amino-acid chain: Putative N-acetylmannosamine-6-phosphate 2-epimerase (229 aa).

The protein belongs to the NanE family.

The enzyme catalyses an N-acyl-D-glucosamine 6-phosphate = an N-acyl-D-mannosamine 6-phosphate. The protein operates within amino-sugar metabolism; N-acetylneuraminate degradation; D-fructose 6-phosphate from N-acetylneuraminate: step 3/5. Functionally, converts N-acetylmannosamine-6-phosphate (ManNAc-6-P) to N-acetylglucosamine-6-phosphate (GlcNAc-6-P). The chain is Putative N-acetylmannosamine-6-phosphate 2-epimerase from Actinobacillus pleuropneumoniae serotype 5b (strain L20).